The following is a 205-amino-acid chain: ATP phosphoribosyltransferase (205 aa).

It belongs to the ATP phosphoribosyltransferase family. Short subfamily. Heteromultimer composed of HisG and HisZ subunits.

The protein resides in the cytoplasm. It catalyses the reaction 1-(5-phospho-beta-D-ribosyl)-ATP + diphosphate = 5-phospho-alpha-D-ribose 1-diphosphate + ATP. Its pathway is amino-acid biosynthesis; L-histidine biosynthesis; L-histidine from 5-phospho-alpha-D-ribose 1-diphosphate: step 1/9. Functionally, catalyzes the condensation of ATP and 5-phosphoribose 1-diphosphate to form N'-(5'-phosphoribosyl)-ATP (PR-ATP). Has a crucial role in the pathway because the rate of histidine biosynthesis seems to be controlled primarily by regulation of HisG enzymatic activity. In Leptospira borgpetersenii serovar Hardjo-bovis (strain JB197), this protein is ATP phosphoribosyltransferase.